A 628-amino-acid polypeptide reads, in one-letter code: Carbon monoxide dehydrogenase 1 (628 aa).

Residues C44, C52, C53, C56, C61, and C75 each coordinate [4Fe-4S] cluster. The [Ni-4Fe-5S] cluster site is built by H266, C302, C340, C448, C478, and C519.

Belongs to the Ni-containing carbon monoxide dehydrogenase family. Homodimer. It depends on [4Fe-4S] cluster as a cofactor. Requires [Ni-4Fe-5S] cluster as cofactor.

The catalysed reaction is CO + 2 oxidized [2Fe-2S]-[ferredoxin] + H2O = 2 reduced [2Fe-2S]-[ferredoxin] + CO2 + 2 H(+). Functionally, CODH oxidizes carbon monoxide coupled, via CooF, to the reduction of a hydrogen cation by a hydrogenase (possibly CooH). The protein is Carbon monoxide dehydrogenase 1 (cooS1) of Methanosarcina mazei (strain ATCC BAA-159 / DSM 3647 / Goe1 / Go1 / JCM 11833 / OCM 88) (Methanosarcina frisia).